The chain runs to 533 residues: Di/tripeptide-binding protein 3 (533 aa).

The N-terminal stretch at methionine 1–alanine 24 is a signal peptide.

Belongs to the bacterial solute-binding protein 5 family. As to quaternary structure, the complex is composed of two ATP-binding proteins (DppD and DppF), two transmembrane proteins (DppB and DppC) and a solute-binding protein (DppA3). Five orthologous SBPs (DppA1-A5) are present in P.aeruginosa, which increases the substrate specificity of the DppBCDF transporter.

Its function is as follows. Part of the ABC transporter DppABCDF involved in the uptake of various di/tripeptides. Prefers dipeptides with acidic residues at the C-terminal end. Involved in the uptake of phaseolotoxin, a toxic tripeptide inhibiting the enzyme ornithine carbamoyltransferase. In Pseudomonas aeruginosa (strain UCBPP-PA14), this protein is Di/tripeptide-binding protein 3.